Consider the following 182-residue polypeptide: MKVNKELARKLSKKIVFSVPKDKESLSAVSDFLGLLGVLYKKEPKFRDFVLSPFVSNEQKKLFIKSLIQKGNIPKEIEFFVDELIDLNLLRIVGEIKRLFDYESEKILSIYKGKLIFAKEPVKELVDEIIQRVEKVLNRKIEPEISVNEALIGGFELRLSGLVLDTSVRSVLQNLSNKVKSL.

The protein belongs to the ATPase delta chain family. As to quaternary structure, F-type ATPases have 2 components, F(1) - the catalytic core - and F(0) - the membrane proton channel. F(1) has five subunits: alpha(3), beta(3), gamma(1), delta(1), epsilon(1). F(0) has three main subunits: a(1), b(2) and c(10-14). The alpha and beta chains form an alternating ring which encloses part of the gamma chain. F(1) is attached to F(0) by a central stalk formed by the gamma and epsilon chains, while a peripheral stalk is formed by the delta and b chains.

The protein resides in the cell inner membrane. F(1)F(0) ATP synthase produces ATP from ADP in the presence of a proton or sodium gradient. F-type ATPases consist of two structural domains, F(1) containing the extramembraneous catalytic core and F(0) containing the membrane proton channel, linked together by a central stalk and a peripheral stalk. During catalysis, ATP synthesis in the catalytic domain of F(1) is coupled via a rotary mechanism of the central stalk subunits to proton translocation. In terms of biological role, this protein is part of the stalk that links CF(0) to CF(1). It either transmits conformational changes from CF(0) to CF(1) or is implicated in proton conduction. This chain is ATP synthase subunit delta, found in Hydrogenobaculum sp. (strain Y04AAS1).